The chain runs to 521 residues: Glucose-6-phosphate isomerase (521 aa).

The Proton donor role is filled by glutamate 327. Active-site residues include histidine 358 and lysine 486.

Belongs to the GPI family.

It localises to the cytoplasm. It carries out the reaction alpha-D-glucose 6-phosphate = beta-D-fructose 6-phosphate. It functions in the pathway carbohydrate biosynthesis; gluconeogenesis. Its pathway is carbohydrate degradation; glycolysis; D-glyceraldehyde 3-phosphate and glycerone phosphate from D-glucose: step 2/4. Functionally, catalyzes the reversible isomerization of glucose-6-phosphate to fructose-6-phosphate. The sequence is that of Glucose-6-phosphate isomerase from Bordetella bronchiseptica (strain ATCC BAA-588 / NCTC 13252 / RB50) (Alcaligenes bronchisepticus).